Reading from the N-terminus, the 210-residue chain is Thymidylate kinase (210 aa).

10 to 17 (GLEGAGKS) serves as a coordination point for ATP.

This sequence belongs to the thymidylate kinase family.

It carries out the reaction dTMP + ATP = dTDP + ADP. Phosphorylation of dTMP to form dTDP in both de novo and salvage pathways of dTTP synthesis. The sequence is that of Thymidylate kinase (tmk) from Haemophilus influenzae (strain ATCC 51907 / DSM 11121 / KW20 / Rd).